Consider the following 127-residue polypeptide: Small ribosomal subunit protein uS11 (127 aa).

Belongs to the universal ribosomal protein uS11 family. As to quaternary structure, part of the 30S ribosomal subunit. Interacts with proteins S7 and S18. Binds to IF-3.

Functionally, located on the platform of the 30S subunit, it bridges several disparate RNA helices of the 16S rRNA. Forms part of the Shine-Dalgarno cleft in the 70S ribosome. This chain is Small ribosomal subunit protein uS11, found in Rickettsia felis (strain ATCC VR-1525 / URRWXCal2) (Rickettsia azadi).